A 227-amino-acid chain; its full sequence is Iron-regulated surface determinant protein C (227 aa).

An N-terminal signal peptide occupies residues 1-28; it reads MKNILKVFNTMILALIIIIATFSNTANA. The region spanning 29–150 is the NEAT domain; the sequence is ADSGTLNYEV…KFNGPSDVAG (122 aa). Positions 47, 48, 132, and 136 each coordinate heme. The interval 149–191 is disordered; it reads AGANAPGKDDKNSASGSDKGSDGATTGQSESNSSNKDKVENPQ. The span at 161 to 172 shows a compositional bias: low complexity; it reads SASGSDKGSDGA. Polar residues predominate over residues 173–182; it reads TTGQSESNSS. The NPQTN sorting signal signature appears at 189–193; it reads NPQTN. Position 192 is a pentaglycyl murein peptidoglycan amidated threonine (Thr-192). The propeptide at 193-227 is removed by sortase B; it reads NAGTPAYIYAIPVASLALLIAITLFVRKKSKGNVE.

This sequence belongs to the IsdC family. Monomer. Interacts with IsdA.

It localises to the secreted. It is found in the cell wall. Its function is as follows. Involved in heme (porphyrin) scavenging. Binds hemoglobin and almost exclusively free-base protoporphyrin IX. Probably has a role as the central conduit of the isd heme uptake system, i.e. mediates the transfer of the iron-containing nutrient from IsdABH to the membrane translocation system IsdDEF. Hemin-free IsdC (apo-IsdC) acquires hemin from hemin-containing IsdA (holo-IsdA) probably through the activated holo-IsdA-apo-IsdC complex and due to the higher affinity of apo-IsdC for the cofactor. The reaction is reversible. This chain is Iron-regulated surface determinant protein C (isdC), found in Staphylococcus aureus (strain MRSA252).